The sequence spans 104 residues: Small ribosomal subunit protein uS10 (104 aa).

It belongs to the universal ribosomal protein uS10 family. As to quaternary structure, part of the 30S ribosomal subunit.

Involved in the binding of tRNA to the ribosomes. This is Small ribosomal subunit protein uS10 from Alkaliphilus oremlandii (strain OhILAs) (Clostridium oremlandii (strain OhILAs)).